Reading from the N-terminus, the 492-residue chain is Protein GvpD2 (492 aa).

Position 39-46 (39-46) interacts with ATP; sequence GAPGTGKT. Basic and acidic residues predominate over residues 355 to 368; sequence RDHDDAVDPDRLPG. The tract at residues 355–379 is disordered; sequence RDHDDAVDPDRLPGHDTTPTEHGTL.

This sequence belongs to the gas vesicle GvpD family. In terms of assembly, homodimer. Interacts with GvpE, also with GvpE from H.mediterranei.

It is found in the cytoplasm. Causes a decrease in the amount of GvpE protein. Gas vesicles are hollow, gas filled proteinaceous nanostructures found in several microbial planktonic microorganisms. They allow positioning of halobacteria at the optimal depth for growth in the poorly aerated, shallow brine pools of their habitat. In terms of biological role, expression of 2 c-vac DNA fragments containing 2 divergently transcribed regions (gvpE-gvpF-gvpG-gvpH-gvpI-gvpJ-gvpK-gvpL-gvpM and gvpA-gvpC-gvpN-gvpO) allows H.volcanii to produce gas vesicles. This chain is Protein GvpD2, found in Halobacterium salinarum (strain ATCC 700922 / JCM 11081 / NRC-1) (Halobacterium halobium).